Consider the following 291-residue polypeptide: m-AAA protease-interacting protein 1, mitochondrial (291 aa).

Residues 1–96 constitute a mitochondrion transit peptide; that stretch reads MALAARLLPL…SLPASPIRSY (96 aa).

Interacts with AFG3L2. Interacts with SPG7. Interacts with SMDT1/EMRE (via the N-terminal transit peptide); interaction is direct and takes place before maturation of SMDT1/EMRE.

It is found in the mitochondrion matrix. In terms of biological role, promotes sorting of SMDT1/EMRE in mitochondria by ensuring its maturation. Interacts with the transit peptide region of SMDT1/EMRE precursor protein in the mitochondrial matrix, leading to protect it against protein degradation by YME1L1, thereby ensuring SMDT1/EMRE maturation by the mitochondrial processing peptidase (PMPCA and PMPCB). This chain is m-AAA protease-interacting protein 1, mitochondrial, found in Rattus norvegicus (Rat).